The sequence spans 25 residues: GVVDILKGAGKDLLAHLVGKISEKV.

A Valine amide modification is found at Val-25.

In terms of tissue distribution, expressed by the skin dorsal glands.

It is found in the secreted. In terms of biological role, has hemolytic activity against human erythrocytes and antibacterial activity against the Gram-negative bacterium E.coli. The polypeptide is Ocellatin-1 (Leptodactylus ocellatus (Argus frog)).